The primary structure comprises 663 residues: 72 kDa type IV collagenase (663 aa).

The signal sequence occupies residues 1-26; that stretch reads MKTHSVFGFFFKVLLIQVYLFNKTLA. Positions 27–106 are cleaved as a propeptide — activation peptide; sequence APSPIIKFPG…PRCGNPDVAN (80 aa). Positions 97–104 match the Cysteine switch motif; sequence PRCGNPDV. Position 99 (Cys99) interacts with Zn(2+). Residues 107–218 are collagenase-like 1; that stretch reads YNFFPRKPKW…LWTLGEGQVV (112 aa). Ca(2+) contacts are provided by Asp131 and Asp165. Residues His175 and Asp177 each coordinate Zn(2+). Residues Asp182 and Gly183 each coordinate Ca(2+). His190 is a Zn(2+) binding site. Ca(2+)-binding residues include Gly197, Gly199, and Asp201. His203 contributes to the Zn(2+) binding site. Ca(2+)-binding residues include Asp205, Asp206, and Glu208. The interval 219-393 is collagen-binding; the sequence is RVKYGNADGE…WGFCPDQGYS (175 aa). Fibronectin type-II domains are found at residues 225–273, 283–331, and 341–389; these read ADGE…FCPH, GDGQ…FCPE, and SEGA…FCPD. 6 disulfides stabilise this stretch: Cys230–Cys256, Cys244–Cys271, Cys288–Cys314, Cys302–Cys329, Cys346–Cys372, and Cys360–Cys387. The collagenase-like 2 stretch occupies residues 394–468; that stretch reads LFLVAAHEFG…GPRPTLGPVT (75 aa). Residue His400 participates in Zn(2+) binding. Residue Glu401 is part of the active site. Positions 404 and 410 each coordinate Zn(2+). Positions 445 to 464 are disordered; that stretch reads SPDVEPGPGPGPGPGPRPTL. The segment covering 449 to 463 has biased composition (pro residues); sequence EPGPGPGPGPGPRPT. Cys472 and Cys663 are disulfide-bonded. 4 Hemopexin repeats span residues 475–519, 520–566, 568–616, and 617–663; these read DIVF…WPDL, PEKI…GLPP, VQRI…WNGV, and PDNL…WLGC. Positions 479, 524, 572, and 621 each coordinate Ca(2+).

It belongs to the peptidase M10A family. In terms of assembly, ligand for integrin alpha-V/beta-3. Ca(2+) is required as a cofactor. It depends on Zn(2+) as a cofactor. Post-translationally, the propeptide is processed by MMP14 (MT-MMP1) and MMP16 (MT-MMP3). As to expression, produced by normal skin fibroblasts.

It localises to the secreted. Its subcellular location is the extracellular space. The protein localises to the extracellular matrix. It catalyses the reaction Cleavage of gelatin type I and collagen types IV, V, VII, X. Cleaves the collagen-like sequence Pro-Gln-Gly-|-Ile-Ala-Gly-Gln.. This Gallus gallus (Chicken) protein is 72 kDa type IV collagenase (MMP2).